Consider the following 294-residue polypeptide: 33 kDa chaperonin (294 aa).

Cystine bridges form between C239/C241 and C272/C275.

It belongs to the HSP33 family. Under oxidizing conditions two disulfide bonds are formed involving the reactive cysteines. Under reducing conditions zinc is bound to the reactive cysteines and the protein is inactive.

It is found in the cytoplasm. In terms of biological role, redox regulated molecular chaperone. Protects both thermally unfolding and oxidatively damaged proteins from irreversible aggregation. Plays an important role in the bacterial defense system toward oxidative stress. The sequence is that of 33 kDa chaperonin from Listeria monocytogenes serotype 4a (strain HCC23).